The following is an 85-amino-acid chain: ATP synthase subunit c (85 aa).

The next 2 membrane-spanning stretches (helical) occupy residues 10 to 30 (IAVGIIVGLASLGTAIGFALL) and 53 to 73 (FIIAGLLDAVPMIGIVIALLF).

Belongs to the ATPase C chain family. In terms of assembly, F-type ATPases have 2 components, F(1) - the catalytic core - and F(0) - the membrane proton channel. F(1) has five subunits: alpha(3), beta(3), gamma(1), delta(1), epsilon(1). F(0) has three main subunits: a(1), b(2) and c(10-14). The alpha and beta chains form an alternating ring which encloses part of the gamma chain. F(1) is attached to F(0) by a central stalk formed by the gamma and epsilon chains, while a peripheral stalk is formed by the delta and b chains.

It is found in the cell inner membrane. Functionally, f(1)F(0) ATP synthase produces ATP from ADP in the presence of a proton or sodium gradient. F-type ATPases consist of two structural domains, F(1) containing the extramembraneous catalytic core and F(0) containing the membrane proton channel, linked together by a central stalk and a peripheral stalk. During catalysis, ATP synthesis in the catalytic domain of F(1) is coupled via a rotary mechanism of the central stalk subunits to proton translocation. In terms of biological role, key component of the F(0) channel; it plays a direct role in translocation across the membrane. A homomeric c-ring of between 10-14 subunits forms the central stalk rotor element with the F(1) delta and epsilon subunits. In Aliivibrio fischeri (strain ATCC 700601 / ES114) (Vibrio fischeri), this protein is ATP synthase subunit c.